Reading from the N-terminus, the 345-residue chain is Phosphate acyltransferase (345 aa).

It belongs to the PlsX family. As to quaternary structure, homodimer. Probably interacts with PlsY.

Its subcellular location is the cytoplasm. The enzyme catalyses a fatty acyl-[ACP] + phosphate = an acyl phosphate + holo-[ACP]. The protein operates within lipid metabolism; phospholipid metabolism. In terms of biological role, catalyzes the reversible formation of acyl-phosphate (acyl-PO(4)) from acyl-[acyl-carrier-protein] (acyl-ACP). This enzyme utilizes acyl-ACP as fatty acyl donor, but not acyl-CoA. The sequence is that of Phosphate acyltransferase from Wolbachia sp. subsp. Brugia malayi (strain TRS).